A 314-amino-acid chain; its full sequence is Lipoyl synthase (314 aa).

Residues Cys-61, Cys-66, Cys-72, Cys-87, Cys-91, Cys-94, and Ser-301 each coordinate [4Fe-4S] cluster. Residues 73 to 290 form the Radical SAM core domain; the sequence is FGRGTATFMI…ERIATNLGFS (218 aa).

It belongs to the radical SAM superfamily. Lipoyl synthase family. [4Fe-4S] cluster serves as cofactor.

It is found in the cytoplasm. It carries out the reaction [[Fe-S] cluster scaffold protein carrying a second [4Fe-4S](2+) cluster] + N(6)-octanoyl-L-lysyl-[protein] + 2 oxidized [2Fe-2S]-[ferredoxin] + 2 S-adenosyl-L-methionine + 4 H(+) = [[Fe-S] cluster scaffold protein] + N(6)-[(R)-dihydrolipoyl]-L-lysyl-[protein] + 4 Fe(3+) + 2 hydrogen sulfide + 2 5'-deoxyadenosine + 2 L-methionine + 2 reduced [2Fe-2S]-[ferredoxin]. It participates in protein modification; protein lipoylation via endogenous pathway; protein N(6)-(lipoyl)lysine from octanoyl-[acyl-carrier-protein]: step 2/2. Functionally, catalyzes the radical-mediated insertion of two sulfur atoms into the C-6 and C-8 positions of the octanoyl moiety bound to the lipoyl domains of lipoate-dependent enzymes, thereby converting the octanoylated domains into lipoylated derivatives. In Nitrosomonas eutropha (strain DSM 101675 / C91 / Nm57), this protein is Lipoyl synthase.